The primary structure comprises 219 residues: Chalcone--flavanone isomerase (219 aa).

Substrate-binding residues include T50, N115, and S192.

It belongs to the chalcone isomerase family.

It catalyses the reaction a chalcone = a flavanone.. It participates in secondary metabolite biosynthesis; flavonoid biosynthesis. In terms of biological role, catalyzes the intramolecular cyclization of bicyclic chalcones into tricyclic (S)-flavanones. Responsible for the isomerization of 4,2',4',6'-tetrahydroxychalcone (also termed chalcone) into naringenin. This chain is Chalcone--flavanone isomerase (CHI), found in Pyrus communis (Pear).